A 1074-amino-acid chain; its full sequence is Formin-G (1074 aa).

Positions 34-423 (LQMQQGSKTY…DKINEFEKKI (390 aa)) constitute a GBD/FH3 domain. Disordered stretches follow at residues 476–507 (QSISPSQDSSNNQKASSSSSNTSTLNDSDIQS) and 549–639 (FTPT…NPSS). Positions 481-503 (SQDSSNNQKASSSSSNTSTLNDS) are enriched in low complexity. Residues 502 to 530 (DSDIQSIQSSLKEATLEIERLKLAIEEKM) adopt a coiled-coil conformation. The segment covering 549-561 (FTPTSPDISNDGQ) has biased composition (polar residues). Residues 568–610 (APPPSPSPPPPISGGGAPPPPPPPPPPPSGGGAPPPPPPPPPS) show a composition bias toward pro residues. The FH1 domain occupies 597-623 (GGGAPPPPPPPPPSGGKKAGAPGAPPT). Positions 631 to 1031 (NKPVINPSSK…ASGDNGAVQN (401 aa)) constitute an FH2 domain. Residues 914 to 971 (DINDLEKQFNISKNNCKKVLEANIPSSSKFQSTIGSFLEKTEIDIKNLKENQKNIVDS) adopt a coiled-coil conformation. The DAD domain occupies 1037-1073 (GADPLAALANAIKLGQTGLRKRPGPENSSGGSQLNLN). Positions 1053–1074 (TGLRKRPGPENSSGGSQLNLNK) are disordered. A compositionally biased stretch (polar residues) spans 1062–1074 (ENSSGGSQLNLNK).

This sequence belongs to the formin homology family. Diaphanous subfamily. Interacts (via GBD/FH3 domain) with activated Rho-GTPases.

Its function is as follows. Formins play an important role in the nucleation of actin and the formation of linear actin filaments. This chain is Formin-G (forG), found in Dictyostelium discoideum (Social amoeba).